The chain runs to 492 residues: 2,3-bisphosphoglycerate-independent phosphoglycerate mutase (492 aa).

Positions 11 and 61 each coordinate Mn(2+). The active-site Phosphoserine intermediate is serine 61. Residues histidine 118, 147 to 148, arginine 178, arginine 184, 248 to 251, and lysine 320 contribute to the substrate site; these read RD and RNDR. Mn(2+) is bound by residues aspartate 386, histidine 390, aspartate 427, histidine 428, and histidine 445.

Belongs to the BPG-independent phosphoglycerate mutase family. Monomer. The cofactor is Mn(2+).

It catalyses the reaction (2R)-2-phosphoglycerate = (2R)-3-phosphoglycerate. It functions in the pathway carbohydrate degradation; glycolysis; pyruvate from D-glyceraldehyde 3-phosphate: step 3/5. Its function is as follows. Catalyzes the interconversion of 2-phosphoglycerate and 3-phosphoglycerate. The polypeptide is 2,3-bisphosphoglycerate-independent phosphoglycerate mutase (Campylobacter jejuni subsp. jejuni serotype O:6 (strain 81116 / NCTC 11828)).